Here is an 89-residue protein sequence, read N- to C-terminus: DNA/RNA-binding protein Alba (89 aa).

K11 carries the post-translational modification N6-acetyllysine.

Belongs to the histone-like Alba family. Post-translationally, acetylated. Acetylation at Lys-11 decreases DNA-binding affinity.

The protein resides in the cytoplasm. The protein localises to the chromosome. Binds double-stranded DNA tightly but without sequence specificity. Involved in DNA compaction. The chain is DNA/RNA-binding protein Alba from Thermoplasma acidophilum (strain ATCC 25905 / DSM 1728 / JCM 9062 / NBRC 15155 / AMRC-C165).